The sequence spans 537 residues: O-phosphoserine--tRNA(Cys) ligase (537 aa).

Substrate contacts are provided by residues 186 to 188 (HMT), 231 to 233 (SAS), 273 to 274 (YY), and Asn317.

It belongs to the class-II aminoacyl-tRNA synthetase family. O-phosphoseryl-tRNA(Cys) synthetase subfamily. In terms of assembly, homotetramer. Interacts with SepCysS.

It catalyses the reaction tRNA(Cys) + O-phospho-L-serine + ATP = O-phospho-L-seryl-tRNA(Cys) + AMP + diphosphate. Its function is as follows. Catalyzes the attachment of O-phosphoserine (Sep) to tRNA(Cys). The chain is O-phosphoserine--tRNA(Cys) ligase from Methanococcus maripaludis (strain C6 / ATCC BAA-1332).